Here is a 198-residue protein sequence, read N- to C-terminus: Imidazole glycerol phosphate synthase subunit HisH (198 aa).

Residues 2–198 form the Glutamine amidotransferase type-1 domain; the sequence is KALLIDYGSG…ALARRYFEVL (197 aa). The active-site Nucleophile is cysteine 80. Active-site residues include histidine 176 and glutamate 178.

As to quaternary structure, heterodimer of HisH and HisF.

The protein resides in the cytoplasm. The catalysed reaction is 5-[(5-phospho-1-deoxy-D-ribulos-1-ylimino)methylamino]-1-(5-phospho-beta-D-ribosyl)imidazole-4-carboxamide + L-glutamine = D-erythro-1-(imidazol-4-yl)glycerol 3-phosphate + 5-amino-1-(5-phospho-beta-D-ribosyl)imidazole-4-carboxamide + L-glutamate + H(+). It carries out the reaction L-glutamine + H2O = L-glutamate + NH4(+). The protein operates within amino-acid biosynthesis; L-histidine biosynthesis; L-histidine from 5-phospho-alpha-D-ribose 1-diphosphate: step 5/9. Functionally, IGPS catalyzes the conversion of PRFAR and glutamine to IGP, AICAR and glutamate. The HisH subunit catalyzes the hydrolysis of glutamine to glutamate and ammonia as part of the synthesis of IGP and AICAR. The resulting ammonia molecule is channeled to the active site of HisF. The protein is Imidazole glycerol phosphate synthase subunit HisH of Thermus thermophilus (strain ATCC BAA-163 / DSM 7039 / HB27).